Reading from the N-terminus, the 742-residue chain is Glycine--tRNA ligase (742 aa).

The region spanning 73–129 (KLAPLRAAVKEYGDLIRDLKAKGAPKIDIDKAVVELKARKRLLEDTEIALAPKEASF) is the WHEP-TRS domain. Glu-309 provides a ligand contact to glycine. ATP is bound by residues 341 to 343 (RNE) and 352 to 353 (RV). Residue Glu-360 participates in glycine binding. ATP is bound at residue 467 to 468 (EC). 586 to 588 (EPS) is a glycine binding site. Arg-593 provides a ligand contact to ATP.

Belongs to the class-II aminoacyl-tRNA synthetase family. As to quaternary structure, homodimer.

The protein localises to the cytoplasm. It localises to the cell projection. The protein resides in the axon. It is found in the secreted. Its subcellular location is the extracellular exosome. It carries out the reaction tRNA(Gly) + glycine + ATP = glycyl-tRNA(Gly) + AMP + diphosphate. The enzyme catalyses 2 ATP + H(+) = P(1),P(4)-bis(5'-adenosyl) tetraphosphate + diphosphate. Catalyzes the ATP-dependent ligation of glycine to the 3'-end of its cognate tRNA, via the formation of an aminoacyl-adenylate intermediate (Gly-AMP). Also produces diadenosine tetraphosphate (Ap4A), a universal pleiotropic signaling molecule needed for cell regulation pathways, by direct condensation of 2 ATPs. Thereby, may play a special role in Ap4A homeostasis. The protein is Glycine--tRNA ligase of Caenorhabditis elegans.